The chain runs to 457 residues: Phosphomethylpyrimidine synthase (457 aa).

Substrate contacts are provided by residues N81, M110, Y139, H175, 195-197 (SRG), 236-239 (DALR), and E275. H279 serves as a coordination point for Zn(2+). Position 302 (Y302) interacts with substrate. Position 343 (H343) interacts with Zn(2+). [4Fe-4S] cluster-binding residues include C423, C426, and C431.

The protein belongs to the ThiC family. [4Fe-4S] cluster serves as cofactor.

It catalyses the reaction 5-amino-1-(5-phospho-beta-D-ribosyl)imidazole + S-adenosyl-L-methionine = 4-amino-2-methyl-5-(phosphooxymethyl)pyrimidine + CO + 5'-deoxyadenosine + formate + L-methionine + 3 H(+). Its pathway is cofactor biosynthesis; thiamine diphosphate biosynthesis. Catalyzes the synthesis of the hydroxymethylpyrimidine phosphate (HMP-P) moiety of thiamine from aminoimidazole ribotide (AIR) in a radical S-adenosyl-L-methionine (SAM)-dependent reaction. In Aquifex aeolicus (strain VF5), this protein is Phosphomethylpyrimidine synthase.